A 586-amino-acid chain; its full sequence is SPbeta prophage-derived uncharacterized protein YorA (586 aa).

PbH1 repeat units lie at residues 108–147, 148–170, 184–206, 207–235, 246–268, 288–313, 320–341, 364–384, 387–410, 411–432, 435–456, 481–504, and 505–531; these read AENV…HVHG, SKNV…WIAA, SKSV…ATNG, CEGL…DLEG, PYEL…TAHT, STDV…DSVG, GNRI…MIRG, AEDV…QIQV, SSDI…KVMD, SNDV…YCER, AVRI…YWDK, MYNI…HLIG, and GSEH…YLNG.

The sequence is that of SPbeta prophage-derived uncharacterized protein YorA (yorA) from Bacillus subtilis (strain 168).